A 539-amino-acid chain; its full sequence is Chaperonin GroEL 1 (539 aa).

Residues 29–32 (TLGP), 86–90 (DGTTT), Gly413, 478–480 (NAA), and Asp494 contribute to the ATP site. Residues 520–539 (IVDKPAEPEDDGHGHHGHAH) are disordered. Basic and acidic residues predominate over residues 523–533 (KPAEPEDDGHG).

Belongs to the chaperonin (HSP60) family. Forms a cylinder of 14 subunits composed of two heptameric rings stacked back-to-back. Interacts with the co-chaperonin GroES.

Its subcellular location is the cytoplasm. It catalyses the reaction ATP + H2O + a folded polypeptide = ADP + phosphate + an unfolded polypeptide.. Its function is as follows. Together with its co-chaperonin GroES, plays an essential role in assisting protein folding. The GroEL-GroES system forms a nano-cage that allows encapsulation of the non-native substrate proteins and provides a physical environment optimized to promote and accelerate protein folding. The chain is Chaperonin GroEL 1 from Mycobacterium ulcerans (strain Agy99).